We begin with the raw amino-acid sequence, 421 residues long: MDLEAKVKKMGLGHEQGFGAPCLKCKEKCEGFELHFWRKICRNCKCGQEEHDVLLSNEEDRKVGKLFEDTKYTTLIAKLKSDGIPMYKRNVMILTNPVAAKKNVSINTVTYEWAPPVQNQALARQYMQMLPKEKQPVAGSEGAQYRKKQLAKQLPAHDQDPSKCHELSPKEVKEMEQFVKKYKSEALGVGDVKLPRDMNTQGPNRMYIPGGDRSTTTAVGAMEDKSAEHKRTQYSCYCCKLSMKEGDPAIYAERAGYDKLWHPACFVCSACHELLVDMIYFWKNGKLYCGRHYCDSEKPRCAGCDELIFSNEYTQAENQNWHLKHFCCFDCDNILAGEIYVMVNDKPVCKPCYVKNHAVVCQGCHNAIDPEVQRVSYNNFSWHASTECFLCSCCSRCLIGQKFMPVEGMVFCSVECKKMMS.

The 108-residue stretch at 92 to 199 (MILTNPVAAK…GDVKLPRDMN (108 aa)) folds into the PET domain. Disordered regions lie at residues 133-164 (EKQP…PSKC) and 193-213 (KLPR…GGDR). Residues 155 to 164 (PAHDQDPSKC) are compositionally biased toward basic and acidic residues. 3 consecutive LIM zinc-binding domains span residues 234–297 (YSCY…CDSE), 299–359 (PRCA…NHAV), and 362–421 (QGCH…KMMS).

Belongs to the prickle / espinas / testin family. Interacts via LIM domain 1 with ZYX. Interacts (via LIM domain 3) with ENAH and VASP. Interacts with ALKBH4, talin, actin, alpha-actinin, GRIP1 and PXN. Interacts (via LIM domain 2) with ACTL7A (via N-terminus). Heterodimer with ACTL7A; the heterodimer interacts with ENAH to form a heterotrimer.

The protein localises to the cytoplasm. It is found in the cell junction. The protein resides in the focal adhesion. Scaffold protein that may play a role in cell adhesion, cell spreading and in the reorganization of the actin cytoskeleton. Plays a role in the regulation of cell proliferation. May act as a tumor suppressor. In Muntiacus muntjak (Barking deer), this protein is Testin (TES).